We begin with the raw amino-acid sequence, 848 residues long: Leucine--tRNA ligase (848 aa).

Residues 1–16 (MCPEQPHDTRAERDEM) are compositionally biased toward basic and acidic residues. The tract at residues 1–30 (MCPEQPHDTRAERDEMSEQTQQAAQPAETA) is disordered. The span at 18 to 30 (EQTQQAAQPAETA) shows a compositional bias: low complexity. A 'HIGH' region motif is present at residues 69 to 79 (PYPSGDLHMGH). Residues 614-618 (KMSKS) carry the 'KMSKS' region motif. K617 is an ATP binding site.

The protein belongs to the class-I aminoacyl-tRNA synthetase family.

The protein localises to the cytoplasm. It carries out the reaction tRNA(Leu) + L-leucine + ATP = L-leucyl-tRNA(Leu) + AMP + diphosphate. This Nocardioides sp. (strain ATCC BAA-499 / JS614) protein is Leucine--tRNA ligase.